The sequence spans 145 residues: Globin (145 aa).

Serine 2 is subject to N-acetylserine. The region spanning 2–145 is the Globin domain; the sequence is SLSAAEADLV…IVAALKAAGK (144 aa). Histidine 96 provides a ligand contact to heme b.

This sequence belongs to the globin family. As to quaternary structure, monomer.

In Aplysia kurodai (Kuroda's sea hare), this protein is Globin.